Reading from the N-terminus, the 291-residue chain is Bis(5'-nucleosyl)-tetraphosphatase, symmetrical (291 aa).

Belongs to the Ap4A hydrolase family.

The catalysed reaction is P(1),P(4)-bis(5'-adenosyl) tetraphosphate + H2O = 2 ADP + 2 H(+). Functionally, hydrolyzes diadenosine 5',5'''-P1,P4-tetraphosphate to yield ADP. This Coxiella burnetii (strain Dugway 5J108-111) protein is Bis(5'-nucleosyl)-tetraphosphatase, symmetrical.